The chain runs to 292 residues: Tumor necrosis factor alpha-induced protein 8-like protein 3 (292 aa).

A disordered region spans residues 81–107; it reads DAQPAARSMDSDSGEQSEGEPVTAAGP. Residues 109-292 form a binding to phosphoinositides region; sequence VFSSKSLALQ…INKLLDEKVL (184 aa).

The protein belongs to the TNFAIP8 family. Widely expressed (at protein level). Highly expressed in most carcinoma cell lines.

It localises to the cytoplasm. The protein resides in the cell membrane. Acts as a lipid transfer protein. Preferentially captures and shuttles two lipid second messengers, i.e., phosphatidylinositol 4,5- bisphosphate and phosphatidylinositol 3,4,5-trisphosphate and increases their levels in the plasma membrane. Additionally, may also function as a lipid-presenting protein to enhance the activity of the PI3K-AKT and MEK-ERK pathways. May act as a regulator of tumorigenesis through its activation of phospholipid signaling. This is Tumor necrosis factor alpha-induced protein 8-like protein 3 (TNFAIP8L3) from Homo sapiens (Human).